A 274-amino-acid polypeptide reads, in one-letter code: 4-hydroxy-tetrahydrodipicolinate reductase (274 aa).

Residues 11–16 (GGSGRM) and E37 each bind NAD(+). Residue R38 coordinates NADP(+). NAD(+)-binding positions include 101-103 (GTT) and 125-128 (APNM). H158 functions as the Proton donor/acceptor in the catalytic mechanism. H159 lines the (S)-2,3,4,5-tetrahydrodipicolinate pocket. Residue K162 is the Proton donor of the active site. Position 168–169 (168–169 (GT)) interacts with (S)-2,3,4,5-tetrahydrodipicolinate.

It belongs to the DapB family.

Its subcellular location is the cytoplasm. It carries out the reaction (S)-2,3,4,5-tetrahydrodipicolinate + NAD(+) + H2O = (2S,4S)-4-hydroxy-2,3,4,5-tetrahydrodipicolinate + NADH + H(+). The catalysed reaction is (S)-2,3,4,5-tetrahydrodipicolinate + NADP(+) + H2O = (2S,4S)-4-hydroxy-2,3,4,5-tetrahydrodipicolinate + NADPH + H(+). It participates in amino-acid biosynthesis; L-lysine biosynthesis via DAP pathway; (S)-tetrahydrodipicolinate from L-aspartate: step 4/4. In terms of biological role, catalyzes the conversion of 4-hydroxy-tetrahydrodipicolinate (HTPA) to tetrahydrodipicolinate. This is 4-hydroxy-tetrahydrodipicolinate reductase from Shewanella pealeana (strain ATCC 700345 / ANG-SQ1).